A 158-amino-acid polypeptide reads, in one-letter code: MLP-like protein 43 (158 aa).

Residue A2 is modified to N-acetylalanine.

It belongs to the MLP family.

The sequence is that of MLP-like protein 43 (MLP43) from Arabidopsis thaliana (Mouse-ear cress).